Here is a 640-residue protein sequence, read N- to C-terminus: Threonine--tRNA ligase (640 aa).

Residues Met1 to Thr61 enclose the TGS domain. The interval Asp242–Pro533 is catalytic. 3 residues coordinate Zn(2+): Cys333, His384, and His510.

This sequence belongs to the class-II aminoacyl-tRNA synthetase family. In terms of assembly, homodimer. Zn(2+) is required as a cofactor.

Its subcellular location is the cytoplasm. It carries out the reaction tRNA(Thr) + L-threonine + ATP = L-threonyl-tRNA(Thr) + AMP + diphosphate + H(+). Its function is as follows. Catalyzes the attachment of threonine to tRNA(Thr) in a two-step reaction: L-threonine is first activated by ATP to form Thr-AMP and then transferred to the acceptor end of tRNA(Thr). Also edits incorrectly charged L-seryl-tRNA(Thr). The polypeptide is Threonine--tRNA ligase (Halorhodospira halophila (strain DSM 244 / SL1) (Ectothiorhodospira halophila (strain DSM 244 / SL1))).